A 391-amino-acid polypeptide reads, in one-letter code: Stearoyl-[acyl-carrier-protein] 9-desaturase 5, chloroplastic (391 aa).

The tract at residues 1-20 (MAFAPSHTASPSYCGVAQGG) is disordered. A chloroplast-targeting transit peptide spans 1 to 32 (MAFAPSHTASPSYCGVAQGGRRSNGMSPVVAM). Residues glutamate 133, glutamate 171, histidine 174, glutamate 224, glutamate 257, and histidine 260 each contribute to the Fe cation site.

This sequence belongs to the fatty acid desaturase type 2 family. Homodimer. Requires Fe(2+) as cofactor.

The protein localises to the plastid. The protein resides in the chloroplast. The enzyme catalyses octadecanoyl-[ACP] + 2 reduced [2Fe-2S]-[ferredoxin] + O2 + 2 H(+) = (9Z)-octadecenoyl-[ACP] + 2 oxidized [2Fe-2S]-[ferredoxin] + 2 H2O. It participates in lipid metabolism; fatty acid metabolism. In terms of biological role, converts stearoyl-ACP to oleoyl-ACP by introduction of a cis double bond between carbons 9 and 10 of the acyl chain. The sequence is that of Stearoyl-[acyl-carrier-protein] 9-desaturase 5, chloroplastic from Oryza sativa subsp. indica (Rice).